The following is a 401-amino-acid chain: Elongation factor Tu, apicoplast (401 aa).

In terms of domain architecture, tr-type G spans 10 to 206 (KPHINIGTIG…ALDSYIPLPK (197 aa)). The segment at 19–26 (GHVDHGKT) is G1. 19 to 26 (GHVDHGKT) serves as a coordination point for GTP. Thr26 is a binding site for Mg(2+). Residues 60–64 (GITIK) are G2. A G3 region spans residues 81 to 84 (DCPG). Residues 81-85 (DCPGH) and 136-139 (NKID) each bind GTP. A G4 region spans residues 136-139 (NKID). The segment at 173–175 (SAL) is G5.

This sequence belongs to the TRAFAC class translation factor GTPase superfamily. Classic translation factor GTPase family. EF-Tu/EF-1A subfamily. As to quaternary structure, monomer.

The protein localises to the plastid. The protein resides in the apicoplast. The enzyme catalyses GTP + H2O = GDP + phosphate + H(+). GTP hydrolase that promotes the GTP-dependent binding of aminoacyl-tRNA to the A-site of ribosomes during protein biosynthesis. The sequence is that of Elongation factor Tu, apicoplast (tufA) from Toxoplasma gondii.